We begin with the raw amino-acid sequence, 911 residues long: Alpha-actinin-4 (911 aa).

The interval 1–30 is disordered; sequence MVDYHAASQSYQYGPSSAGNGAGGGGSMGD. The segment at 1-269 is actin-binding; sequence MVDYHAASQS…YVSSFYHAFS (269 aa). Positions 12–26 are interaction with VCL; that stretch reads QYGPSSAGNGAGGGG. Tyr-31 bears the Phosphotyrosine mark. Positions 40–61 are interaction with VCL; the sequence is RDLLLDPAWEKQQRKTFTAWCN. Calponin-homology (CH) domains are found at residues 50 to 154 and 163 to 269; these read KQQR…LRFA and TSAK…HAFS. An LXXLL motif motif is present at residues 84–88; sequence LMLLL. Positions 108–126 are interaction with VCL; it reads KINNVNKALDFIASKGVKL. Lys-114 carries the N6-acetyllysine modification. Positions 177–192 are polyphosphoinositide (PIP2)-binding; it reads TAPYKNVNVQNFHISW. Lys-214 bears the N6-acetyllysine mark. Phosphothreonine is present on Thr-249. Spectrin repeat units follow at residues 293-403, 413-518, 528-639, and 649-752; these read HLME…WLLN, HLAE…ALEK, QLHL…ALLE, and HLRR…EVEN. Lys-592 and Lys-625 each carry N6-acetyllysine. Ser-696 is subject to Phosphoserine. Residues 736–911 form a mediates interaction with MICALL2 region; that stretch reads WEQLLTTIAR…STALYGESDL (176 aa). EF-hand domains lie at 765–800 and 806–841; these read EQMQ…LGYD and QGEA…ETTD. Asp-778 contacts Ca(2+). Lys-779 bears the N6-acetyllysine mark. Residues Asp-780 and Glu-789 each contribute to the Ca(2+) site. An N6-acetyllysine modification is found at Lys-859. Ser-909 bears the Phosphoserine mark.

This sequence belongs to the alpha-actinin family. As to quaternary structure, homodimer; antiparallel. Identified in a IGF2BP1-dependent mRNP granule complex containing untranslated mRNAs. Component of the CART complex, at least composed of ACTN4, HGS/HRS, MYO5B and TRIM3. Binds TRIM3 at the N-terminus. Interacts with MAGI1. Interacts with PDLIM2. Identified in a complex with CASK, IQGAP1, MAGI2, NPHS1, SPTAN1 and SPTBN1. Interacts with MICALL2 (preferentially in opened conformation); stimulated by RAB13 activation. Interacts with PPARG and RARA. Binds to VCL; this interaction triggers VCL conformational changes. Interacts with SEPTIN14. Interacts with IGSF8.

It is found in the nucleus. It localises to the cytoplasm. The protein resides in the cell junction. The protein localises to the cytoskeleton. Its subcellular location is the stress fiber. It is found in the perinuclear region. Functionally, F-actin cross-linking protein which is thought to anchor actin to a variety of intracellular structures. This is a bundling protein. Probably involved in vesicular trafficking via its association with the CART complex. The CART complex is necessary for efficient transferrin receptor recycling but not for EGFR degradation. Involved in tight junction assembly in epithelial cells probably through interaction with MICALL2. Links MICALL2 to the actin cytoskeleton and recruits it to the tight junctions. May also function as a transcriptional coactivator, stimulating transcription mediated by the nuclear hormone receptors PPARG and RARA. Association with IGSF8 regulates the immune synapse formation and is required for efficient T-cell activation. The protein is Alpha-actinin-4 of Pongo abelii (Sumatran orangutan).